A 556-amino-acid chain; its full sequence is Phenylalanine--tRNA ligase beta subunit (556 aa).

A B5 domain is found at 278–353 (LTPKEFEVEL…IAYGYNNIEP (76 aa)). Mg(2+)-binding residues include Asp331, Asp337, Glu340, and Asp341.

The protein belongs to the phenylalanyl-tRNA synthetase beta subunit family. Type 2 subfamily. Tetramer of two alpha and two beta subunits. Mg(2+) serves as cofactor.

The protein resides in the cytoplasm. The enzyme catalyses tRNA(Phe) + L-phenylalanine + ATP = L-phenylalanyl-tRNA(Phe) + AMP + diphosphate + H(+). The sequence is that of Phenylalanine--tRNA ligase beta subunit from Pyrococcus horikoshii (strain ATCC 700860 / DSM 12428 / JCM 9974 / NBRC 100139 / OT-3).